Here is a 149-residue protein sequence, read N- to C-terminus: Large ribosomal subunit protein uL13 (149 aa).

This sequence belongs to the universal ribosomal protein uL13 family. As to quaternary structure, part of the 50S ribosomal subunit.

Functionally, this protein is one of the early assembly proteins of the 50S ribosomal subunit, although it is not seen to bind rRNA by itself. It is important during the early stages of 50S assembly. The protein is Large ribosomal subunit protein uL13 of Chlorobium luteolum (strain DSM 273 / BCRC 81028 / 2530) (Pelodictyon luteolum).